The chain runs to 921 residues: Isoleucine--tRNA ligase 1 (921 aa).

A 'HIGH' region motif is present at residues 57 to 67; it reads PYANGDIHMGH. E552 is an L-isoleucyl-5'-AMP binding site. Positions 593 to 597 match the 'KMSKS' region motif; that stretch reads KMSKS. ATP is bound at residue K596. C888, C891, C908, and C911 together coordinate Zn(2+).

It belongs to the class-I aminoacyl-tRNA synthetase family. IleS type 1 subfamily. As to quaternary structure, monomer. The cofactor is Zn(2+).

The protein resides in the cytoplasm. It carries out the reaction tRNA(Ile) + L-isoleucine + ATP = L-isoleucyl-tRNA(Ile) + AMP + diphosphate. Functionally, catalyzes the attachment of isoleucine to tRNA(Ile). As IleRS can inadvertently accommodate and process structurally similar amino acids such as valine, to avoid such errors it has two additional distinct tRNA(Ile)-dependent editing activities. One activity is designated as 'pretransfer' editing and involves the hydrolysis of activated Val-AMP. The other activity is designated 'posttransfer' editing and involves deacylation of mischarged Val-tRNA(Ile). This is Isoleucine--tRNA ligase 1 from Bacillus cereus (strain ZK / E33L).